The following is a 347-amino-acid chain: Haptoglobin (347 aa).

Positions 1–18 (MRALGAVVTLLLWGQLFA) are cleaved as a signal peptide. The Sushi domain maps to 31-88 (DSCPKPPEIANGYVEHLVRYRCRQFYKLQTEGDGIYTLNSEKQWVNPAAGDKLPKCEA). Disulfide bonds link Cys-52–Cys-86, Cys-90–Cys-207, Cys-250–Cys-281, and Cys-292–Cys-322. Residues 103–345 (IIGGSMDAKG…LKDWVQETMA (243 aa)) enclose the Peptidase S1 domain. Residues Asn-148 and Asn-152 are each glycosylated (N-linked (GlcNAc...) asparagine). Positions 259-264 (VPEKKG) are interaction with CD163.

This sequence belongs to the peptidase S1 family. In terms of assembly, tetramer of two alpha and two beta chains; disulfide-linked. The hemoglobin/haptoglobin complex is composed of a haptoglobin dimer bound to two hemoglobin alpha-beta dimers. Interacts with CD163. Interacts with ERGIC3. In terms of tissue distribution, expressed by the liver and secreted in plasma.

The protein localises to the secreted. Functionally, as a result of hemolysis, hemoglobin is found to accumulate in the kidney and is secreted in the urine. Haptoglobin captures, and combines with free plasma hemoglobin to allow hepatic recycling of heme iron and to prevent kidney damage. Haptoglobin also acts as an antioxidant, has antibacterial activity and plays a role in modulating many aspects of the acute phase response. Hemoglobin/haptoglobin complexes are rapidly cleared by the macrophage CD163 scavenger receptor expressed on the surface of liver Kupfer cells through an endocytic lysosomal degradation pathway. This is Haptoglobin (Hp) from Rattus norvegicus (Rat).